Reading from the N-terminus, the 154-residue chain is Ribosome maturation factor RimP (154 aa).

It belongs to the RimP family.

Its subcellular location is the cytoplasm. Required for maturation of 30S ribosomal subunits. The polypeptide is Ribosome maturation factor RimP (Finegoldia magna (strain ATCC 29328 / DSM 20472 / WAL 2508) (Peptostreptococcus magnus)).